Consider the following 244-residue polypeptide: MSRRVVALVAAAGKGTRLGADLPKAYVPLRDIPLVVRSVRAMITSAVVDEVIVIISPQMQDYAAALLLRWGLFSADIPVRLVHGGAERADSVWCGLQAIADTDAVVLIHDSARALTPPGMIARVARAVLDGNKAVIPVVPVADTIKTVHGTTVVATPPRRDLRAVQTPQGFDIAALRAANIAYQQQQPDFEATDDASLMEWFGTPVLCVDGDPMAFKVTTPLDYALAKAVTDQAEPTIFEVPSD.

This sequence belongs to the IspD/TarI cytidylyltransferase family. IspD subfamily.

The enzyme catalyses 2-C-methyl-D-erythritol 4-phosphate + CTP + H(+) = 4-CDP-2-C-methyl-D-erythritol + diphosphate. It participates in isoprenoid biosynthesis; isopentenyl diphosphate biosynthesis via DXP pathway; isopentenyl diphosphate from 1-deoxy-D-xylulose 5-phosphate: step 2/6. Its function is as follows. Catalyzes the formation of 4-diphosphocytidyl-2-C-methyl-D-erythritol from CTP and 2-C-methyl-D-erythritol 4-phosphate (MEP). The protein is 2-C-methyl-D-erythritol 4-phosphate cytidylyltransferase of Corynebacterium diphtheriae (strain ATCC 700971 / NCTC 13129 / Biotype gravis).